The chain runs to 483 residues: Cobyric acid synthase (483 aa).

One can recognise a GATase cobBQ-type domain in the interval 251-438 (ALIVAVPMLP…LHGIFSADRF (188 aa)). The Nucleophile role is filled by Cys-333. Residue His-430 is part of the active site.

This sequence belongs to the CobB/CobQ family. CobQ subfamily.

It functions in the pathway cofactor biosynthesis; adenosylcobalamin biosynthesis. Its function is as follows. Catalyzes amidations at positions B, D, E, and G on adenosylcobyrinic A,C-diamide. NH(2) groups are provided by glutamine, and one molecule of ATP is hydrogenolyzed for each amidation. The polypeptide is Cobyric acid synthase (Brucella abortus (strain S19)).